Here is a 556-residue protein sequence, read N- to C-terminus: Formate--tetrahydrofolate ligase (556 aa).

65–72 is an ATP binding site; sequence TPAGEGKS.

The protein belongs to the formate--tetrahydrofolate ligase family.

The enzyme catalyses (6S)-5,6,7,8-tetrahydrofolate + formate + ATP = (6R)-10-formyltetrahydrofolate + ADP + phosphate. The protein operates within one-carbon metabolism; tetrahydrofolate interconversion. This is Formate--tetrahydrofolate ligase from Clostridium perfringens (strain SM101 / Type A).